Consider the following 273-residue polypeptide: HLA class II histocompatibility antigen, DO beta chain (273 aa).

An N-terminal signal peptide occupies residues 1–26 (MGSGWVPWVVALLVNLTRLDSSMTQG). Positions 27-120 (TDSPEDFVIQ…LGAPFTVGRK (94 aa)) are beta-1. The Extracellular segment spans residues 27–224 (TDSPEDFVIQ…RAQSEYSWRK (198 aa)). Cystine bridges form between cysteine 41–cysteine 105 and cysteine 143–cysteine 199. N-linked (GlcNAc...) asparagine glycosylation occurs at asparagine 45. The tract at residues 121–214 (VQPEVTVYPE…SLLSPVSVEW (94 aa)) is beta-2. Residues 123–213 (PEVTVYPERT…SSLLSPVSVE (91 aa)) enclose the Ig-like C1-type domain. The connecting peptide stretch occupies residues 215–224 (RAQSEYSWRK). Residues 225–245 (MLSGIAAFLLGLIFLLVGIVI) form a helical membrane-spanning segment. Over 246 to 273 (QLRAQKGYVRTQMSGNEVSRAVLLPQSC) the chain is Cytoplasmic.

Belongs to the MHC class II family. Heterodimer of an alpha chain (DOA) and a beta chain (DOB). Forms a heterotetrameric complex with an HLA-DM molecule during intracellular transport in endosomal/lysosomal compartments in B-cells.

The protein resides in the endosome membrane. It localises to the lysosome membrane. Its function is as follows. Important modulator in the HLA class II restricted antigen presentation pathway by interaction with the HLA-DM molecule in B-cells. Modifies peptide exchange activity of HLA-DM. The sequence is that of HLA class II histocompatibility antigen, DO beta chain (HLA-DOB) from Homo sapiens (Human).